The primary structure comprises 428 residues: MSFKVEDLGKNMVKLTIEATAEDFDKAIEQAYQKNKGKMNVQGFRKGKAPRAIIEKMYGVGVFYEDAANFIIPEAYEQAIEESKLDVVARPEIDVVQVEKGQPFIFTAEVAVKPEVTLGAYKGVEVSKSEIEVTEDEIMAELDKVREQNSRTITVEDRAVMDKDIVTIDFEGFVDGVAFEGGKGEDYALTIGSHSFIDTFEDQLVGKNIGEDVEVNVTFPTEYHAADLAGKPALFKVKVKEIKAKELPAADDEFAGDVSEFNTLEEYKADLKKSLTEKKDKAAKTAKEDAVVDKVIENATMEIPDAMVDTQKRQMAEDFAQRLKMQGLSLEQYFQFTGLNPNTFMENLGPQALKRIQSRLVLEAVVKAENITVSVEEIDKELAEMASAYQMEVDKLKELIGEKEKEQIVMDMAVQKAIDLVASEAKEV.

One can recognise a PPIase FKBP-type domain in the interval 163–248 (KDIVTIDFEG…VKEIKAKELP (86 aa)).

Belongs to the FKBP-type PPIase family. Tig subfamily.

The protein localises to the cytoplasm. It carries out the reaction [protein]-peptidylproline (omega=180) = [protein]-peptidylproline (omega=0). Functionally, involved in protein export. Acts as a chaperone by maintaining the newly synthesized protein in an open conformation. Functions as a peptidyl-prolyl cis-trans isomerase. This Lachnoclostridium phytofermentans (strain ATCC 700394 / DSM 18823 / ISDg) (Clostridium phytofermentans) protein is Trigger factor.